The chain runs to 318 residues: ZAR1-like protein (318 aa).

Positions 149–211 are disordered; sequence LSDPPEAGQP…PVDSSQPLGR (63 aa). The segment covering 155–169 has biased composition (pro residues); that stretch reads AGQPPPPLPPPSPPP. Residues 219–304 form a 3CxxC-type zinc finger; the sequence is PKYGYFHCKD…QELCGRCKDK (86 aa).

Belongs to the ZAR1 family. In terms of assembly, interacts with YBX2.

Its subcellular location is the cytoplasm. It localises to the cytoplasmic ribonucleoprotein granule. Its function is as follows. mRNA-binding protein required for maternal mRNA storage, translation and degradation during oocyte maturation. Probably promotes formation of some phase-separated membraneless compartment that stores maternal mRNAs in oocytes: acts by undergoing liquid-liquid phase separation upon binding to maternal mRNAs. Binds to the 3'-UTR of maternal mRNAs, inhibiting their translation. This Bos taurus (Bovine) protein is ZAR1-like protein (ZAR1L).